Reading from the N-terminus, the 811-residue chain is Auxin response factor 8 (811 aa).

A DNA-binding region (TF-B3) is located at residues F126–T228. Disordered stretches follow at residues H467 to H496 and H544 to T565. Polar residues-rich tracts occupy residues Y469–L482 and H544–P555. Positions K705 to D789 constitute a PB1 domain.

Belongs to the ARF family. In terms of assembly, homodimers and heterodimers. Expressed in the whole plant.

It localises to the nucleus. Its function is as follows. Auxin response factors (ARFs) are transcriptional factors that bind specifically to the DNA sequence 5'-TGTCTC-3' found in the auxin-responsive promoter elements (AuxREs). Seems to act as transcriptional activator. Formation of heterodimers with Aux/IAA proteins may alter their ability to modulate early auxin response genes expression. Regulates both stamen and gynoecium maturation. Promotes jasmonic acid production. Partially redundant with ARF6. Involved in fruit initiation. Acts as an inhibitor to stop further carpel development in the absence of fertilization and the generation of signals required to initiate fruit and seed development. This is Auxin response factor 8 (ARF8) from Arabidopsis thaliana (Mouse-ear cress).